We begin with the raw amino-acid sequence, 342 residues long: Anthranilate phosphoribosyltransferase (342 aa).

Residues G79, 82 to 83 (GD), T87, 89 to 92 (NVST), 107 to 115 (KHGNRSVSS), and S119 contribute to the 5-phospho-alpha-D-ribose 1-diphosphate site. G79 is an anthranilate binding site. S91 contributes to the Mg(2+) binding site. N110 contacts anthranilate. Residue R165 participates in anthranilate binding. 2 residues coordinate Mg(2+): D223 and E224.

It belongs to the anthranilate phosphoribosyltransferase family. Homodimer. Mg(2+) serves as cofactor.

The catalysed reaction is N-(5-phospho-beta-D-ribosyl)anthranilate + diphosphate = 5-phospho-alpha-D-ribose 1-diphosphate + anthranilate. It participates in amino-acid biosynthesis; L-tryptophan biosynthesis; L-tryptophan from chorismate: step 2/5. Its function is as follows. Catalyzes the transfer of the phosphoribosyl group of 5-phosphorylribose-1-pyrophosphate (PRPP) to anthranilate to yield N-(5'-phosphoribosyl)-anthranilate (PRA). The polypeptide is Anthranilate phosphoribosyltransferase (Aeromonas hydrophila subsp. hydrophila (strain ATCC 7966 / DSM 30187 / BCRC 13018 / CCUG 14551 / JCM 1027 / KCTC 2358 / NCIMB 9240 / NCTC 8049)).